Here is a 747-residue protein sequence, read N- to C-terminus: NAD(P)H-quinone oxidoreductase subunit 5, chloroplastic (747 aa).

The next 16 membrane-spanning stretches (helical) occupy residues 9–29 (WIIP…LLLF), 40–60 (WAFP…DLSI), 89–109 (IDSL…LVLI), 125–145 (FAYL…SNLI), 147–167 (VYIF…FWFT), 185–205 (GDFG…SLEF), 219–239 (NEVN…GSVA), 258–278 (TPIS…FLVA), 280–300 (LLPF…IGII), 327–347 (LGYM…FHLI), 354–374 (ALLF…VGYS), 396–416 (TAFL…CFWS), 425–445 (WLYS…TAFY), 552–572 (LFSM…GISF), 606–626 (FFTN…IASF), and 727–747 (YILF…SFFI).

The protein belongs to the complex I subunit 5 family. As to quaternary structure, NDH is composed of at least 16 different subunits, 5 of which are encoded in the nucleus.

Its subcellular location is the plastid. The protein localises to the chloroplast thylakoid membrane. The catalysed reaction is a plastoquinone + NADH + (n+1) H(+)(in) = a plastoquinol + NAD(+) + n H(+)(out). The enzyme catalyses a plastoquinone + NADPH + (n+1) H(+)(in) = a plastoquinol + NADP(+) + n H(+)(out). In terms of biological role, NDH shuttles electrons from NAD(P)H:plastoquinone, via FMN and iron-sulfur (Fe-S) centers, to quinones in the photosynthetic chain and possibly in a chloroplast respiratory chain. The immediate electron acceptor for the enzyme in this species is believed to be plastoquinone. Couples the redox reaction to proton translocation, and thus conserves the redox energy in a proton gradient. The chain is NAD(P)H-quinone oxidoreductase subunit 5, chloroplastic (ndhF) from Lotus japonicus (Lotus corniculatus var. japonicus).